The sequence spans 164 residues: Protein HIT1 (164 aa).

Residues cysteine 8, cysteine 11, cysteine 28, and cysteine 32 each contribute to the Zn(2+) site. The segment at 8 to 49 adopts an HIT-type; degenerate zinc-finger fold; that stretch reads CGICRGVDGKYKCPKCGVRYCSLKCYKDAAKHVHKESEQPRA.

The polypeptide is Protein HIT1 (HIT1) (Saccharomyces cerevisiae (strain ATCC 204508 / S288c) (Baker's yeast)).